Here is a 432-residue protein sequence, read N- to C-terminus: Killer cell immunoglobulin-like receptor 3DL1 (432 aa).

Positions 1-21 (MLLWFLSLVCSGFFLVQRMSA) are cleaved as a signal peptide. At 22 to 335 (HVGSHDKPFL…ADTKTNNYKN (314 aa)) the chain is on the extracellular side. Ig-like C2-type domains follow at residues 42–100 (GQNV…HPQY), 135–202 (GGNV…NSYY), and 238–301 (GETM…FRNA). N44 carries N-linked (GlcNAc...) asparagine glycosylation. Cysteines 49 and 95 form a disulfide. The N-linked (GlcNAc...) asparagine glycan is linked to N137. Intrachain disulfides connect C142-C195 and C245-C294. N300 carries N-linked (GlcNAc...) asparagine glycosylation. Residues 336–356 (LHILTGLLVTMVLVVIIIFYS) form a helical membrane-spanning segment. The Cytoplasmic portion of the chain corresponds to 357-432 (CYFSKQNKSQ…DTIVYMEIMK (76 aa)).

Belongs to the immunoglobulin superfamily.

It localises to the cell membrane. Functionally, receptor on natural killer (NK) cells. Inhibits the activity of NK cells thus preventing cell lysis. In Mus musculus (Mouse), this protein is Killer cell immunoglobulin-like receptor 3DL1 (Kir3dl1).